We begin with the raw amino-acid sequence, 85 residues long: Granaticin polyketide synthase acyl carrier protein (85 aa).

In terms of domain architecture, Carrier spans 3–81 (RLTLDGLRTI…VLLDLVNGAQ (79 aa)). S41 carries the post-translational modification O-(pantetheine 4'-phosphoryl)serine.

Post-translationally, 4'-phosphopantetheine is transferred from CoA to a specific serine of the apo-ACP-like protein.

It functions in the pathway antibiotic biosynthesis; granaticin biosynthesis. Acyl carrier protein. The polypeptide is Granaticin polyketide synthase acyl carrier protein (Streptomyces violaceoruber).